Consider the following 398-residue polypeptide: Stabilizer of axonemal microtubules 2 (398 aa).

Mn stretches follow at residues 114-126, 148-162, 248-260, 282-296, 316-328, and 350-364; these read STTF…PQEI, ITSH…QLEL, NSTS…PYQA, KSIM…ESCR, LSTF…PHEL, and VTMY…RQEI.

It belongs to the FAM154 family.

This is Stabilizer of axonemal microtubules 2 (SAXO2) from Homo sapiens (Human).